Reading from the N-terminus, the 203-residue chain is MKLLHVDSSILGTYSVSRQLSAEIVAEWRKSRPDTTVEYLDLALNAPNHFGADAIAIKGIAQPEPTEAQRAENALSEQLVSQFLASDVIVIGAPFYNFSIPTQLKAWIDRLAQPGRTFTYNEKGPLGLATGKTVIVASTRGGAYSTSEGGQAMEHQESYLKVVFGFFGITDVRIVRAEGLAMGDAPKAAALSAARADMELATA.

Residues Ser-9, 15 to 17, and 139 to 142 each bind FMN; these read SVS and TRGG.

It belongs to the azoreductase type 1 family. As to quaternary structure, homodimer. FMN is required as a cofactor.

The enzyme catalyses 2 a quinone + NADH + H(+) = 2 a 1,4-benzosemiquinone + NAD(+). The catalysed reaction is N,N-dimethyl-1,4-phenylenediamine + anthranilate + 2 NAD(+) = 2-(4-dimethylaminophenyl)diazenylbenzoate + 2 NADH + 2 H(+). Quinone reductase that provides resistance to thiol-specific stress caused by electrophilic quinones. In terms of biological role, also exhibits azoreductase activity. Catalyzes the reductive cleavage of the azo bond in aromatic azo compounds to the corresponding amines. This is FMN-dependent NADH:quinone oxidoreductase from Albidiferax ferrireducens (strain ATCC BAA-621 / DSM 15236 / T118) (Rhodoferax ferrireducens).